The primary structure comprises 237 residues: dTDP-3-amino-3,4,6-trideoxy-alpha-D-glucopyranose N,N-dimethyltransferase (237 aa).

The substrate site is built by Tyr14 and Arg17. Residues Tyr21, Ala46, Glu67, 89–90 (DM), and Met105 contribute to the S-adenosyl-L-methionine site. Substrate-binding positions include 145–147 (TFA), Ser152, 165–169 (RVSHS), and Arg229.

This sequence belongs to the methyltransferase TylM1/DesVI family. In terms of assembly, homodimer.

The catalysed reaction is dTDP-3-amino-3,4,6-trideoxy-alpha-D-glucose + 2 S-adenosyl-L-methionine = dTDP-alpha-D-desosamine + 2 S-adenosyl-L-homocysteine + 2 H(+). The protein operates within antibiotic biosynthesis. In terms of biological role, S-adenosyl-L-methionine-dependent methyltransferase involved in the biosynthesis of desosamine, found in certain macrolide antibiotics such as erthyromycin, azithromycin, clarithromycin, and methymycin. Catalyzes the last step in the biosynthesis of dTDP-desosamine, i.e. the N,N-dimethylation of the 3-amino group of dTDP-3-amino-3,4,6-trideoxy-alpha-D-glucose. This Streptomyces venezuelae protein is dTDP-3-amino-3,4,6-trideoxy-alpha-D-glucopyranose N,N-dimethyltransferase.